Consider the following 85-residue polypeptide: U4-theraphotoxin-Hhn1a (85 aa).

A signal peptide spans 1–22 (MKVTLIVILTCAAVLVLHTTAA). The propeptide occupies 23–48 (EELEAESQLMEVGMPDTELAAVDEER). Intrachain disulfides connect Cys52–Cys66, Cys56–Cys77, and Cys71–Cys82.

The protein belongs to the neurotoxin 12 (Hwtx-2) family. 02 (Hwtx-2) subfamily. In terms of assembly, monomer. In terms of tissue distribution, expressed by the venom gland.

Its subcellular location is the secreted. Its function is as follows. Neurotoxin active on both insects and mammals. The polypeptide is U4-theraphotoxin-Hhn1a (Cyriopagopus hainanus (Chinese bird spider)).